Reading from the N-terminus, the 199-residue chain is Hematopoietic prostaglandin D synthase (199 aa).

The 78-residue stretch at 2–79 (PNYKLLYFNM…YLTKNTDLAG (78 aa)) folds into the GST N-terminal domain. Residues Tyr8, Arg14, Trp39, 49-51 (GKI), and 63-64 (QS) each bind glutathione. In terms of domain architecture, GST C-terminal spans 81–199 (TALEQCQADA…WILKRPQTKL (119 aa)).

The protein belongs to the GST superfamily. Sigma family. Homodimer. The cofactor is glutathione. Expressed in skin and oviduct.

It is found in the cytoplasm. It catalyses the reaction prostaglandin H2 = prostaglandin D2. The enzyme catalyses RX + glutathione = an S-substituted glutathione + a halide anion + H(+). The catalysed reaction is 2-glyceryl-prostaglandin H2 = 2-glyceryl-prostaglandin D2. Functionally, bifunctional enzyme which catalyzes both the conversion of PGH2 to PGD2, a prostaglandin involved in smooth muscle contraction/relaxation and a potent inhibitor of platelet aggregation, and the conjugation of glutathione with a wide range of aryl halides and organic isothiocyanates. Also exhibits low glutathione-peroxidase activity. This Mus musculus (Mouse) protein is Hematopoietic prostaglandin D synthase.